A 104-amino-acid chain; its full sequence is uncharacterized protein (104 aa).

The protein resides in the mitochondrion. This is an uncharacterized protein from Claviceps purpurea (Ergot fungus).